A 475-amino-acid chain; its full sequence is Glutamyl-tRNA(Gln) amidotransferase subunit A (475 aa).

Active-site charge relay system residues include lysine 69 and serine 144. The Acyl-ester intermediate role is filled by serine 168.

The protein belongs to the amidase family. GatA subfamily. Heterotrimer of A, B and C subunits.

It carries out the reaction L-glutamyl-tRNA(Gln) + L-glutamine + ATP + H2O = L-glutaminyl-tRNA(Gln) + L-glutamate + ADP + phosphate + H(+). Allows the formation of correctly charged Gln-tRNA(Gln) through the transamidation of misacylated Glu-tRNA(Gln) in organisms which lack glutaminyl-tRNA synthetase. The reaction takes place in the presence of glutamine and ATP through an activated gamma-phospho-Glu-tRNA(Gln). The chain is Glutamyl-tRNA(Gln) amidotransferase subunit A from Methanosarcina barkeri (strain Fusaro / DSM 804).